The sequence spans 336 residues: Apyrase (336 aa).

The N-terminal stretch at 1–21 (MFLKFCVVAFAICLSINLSEG) is a signal peptide. Residue Asn209 is glycosylated (N-linked (GlcNAc...) asparagine).

Belongs to the apyrase family. Ca(2+) is required as a cofactor. Salivary gland (at protein level).

Its subcellular location is the secreted. It carries out the reaction a ribonucleoside 5'-triphosphate + 2 H2O = a ribonucleoside 5'-phosphate + 2 phosphate + 2 H(+). Facilitates hematophagy by inhibiting ADP- and collagen-dependent platelet aggregation in the host. Cleaves adenosine triphosphate (ATP) and adenosine diphosphate (ADP) to adenosine monophosphate (AMP) and inorganic phosphate in calcium-dependent manner. The polypeptide is Apyrase (Phlebotomus duboscqi (Sandfly)).